A 421-amino-acid polypeptide reads, in one-letter code: Glutamyl-tRNA reductase (421 aa).

Residues 49-52, S109, 114-116, and Q120 contribute to the substrate site; these read TCNR and EAQ. C50 (nucleophile) is an active-site residue. 189-194 contacts NADP(+); sequence GAGEMC.

This sequence belongs to the glutamyl-tRNA reductase family. As to quaternary structure, homodimer.

The enzyme catalyses (S)-4-amino-5-oxopentanoate + tRNA(Glu) + NADP(+) = L-glutamyl-tRNA(Glu) + NADPH + H(+). Its pathway is porphyrin-containing compound metabolism; protoporphyrin-IX biosynthesis; 5-aminolevulinate from L-glutamyl-tRNA(Glu): step 1/2. Catalyzes the NADPH-dependent reduction of glutamyl-tRNA(Glu) to glutamate 1-semialdehyde (GSA). This is Glutamyl-tRNA reductase from Magnetococcus marinus (strain ATCC BAA-1437 / JCM 17883 / MC-1).